The primary structure comprises 324 residues: RING-H2 finger protein ATL3 (324 aa).

A helical transmembrane segment spans residues I24–L44. The RING-type; atypical zinc finger occupies C127 to R169. Disordered regions lie at residues S179–S210, V226–S248, and R299–P324. 2 stretches are compositionally biased toward polar residues: residues N192 to S210 and V226 to T235. Low complexity predominate over residues S306–P324.

The protein belongs to the RING-type zinc finger family. ATL subfamily.

It localises to the membrane. It carries out the reaction S-ubiquitinyl-[E2 ubiquitin-conjugating enzyme]-L-cysteine + [acceptor protein]-L-lysine = [E2 ubiquitin-conjugating enzyme]-L-cysteine + N(6)-ubiquitinyl-[acceptor protein]-L-lysine.. It participates in protein modification; protein ubiquitination. This chain is RING-H2 finger protein ATL3 (ATL3), found in Arabidopsis thaliana (Mouse-ear cress).